The sequence spans 83 residues: MATKKNQILVPDHIYVPKHEIISKTEAEEVLKKYNCKPTELPLIFVNDPAILGLGVKPGDMIKITRKSPTAGEGLYYRYVVEV.

The protein belongs to the archaeal Rpo5/eukaryotic RPB5 RNA polymerase subunit family. As to quaternary structure, part of the RNA polymerase complex.

The protein localises to the cytoplasm. The enzyme catalyses RNA(n) + a ribonucleoside 5'-triphosphate = RNA(n+1) + diphosphate. DNA-dependent RNA polymerase (RNAP) catalyzes the transcription of DNA into RNA using the four ribonucleoside triphosphates as substrates. The chain is DNA-directed RNA polymerase subunit Rpo5 from Nitrosopumilus maritimus (strain SCM1).